The chain runs to 574 residues: Acetolactate synthase isozyme 3 large subunit (574 aa).

Position 51 (Glu51) interacts with thiamine diphosphate. Residues Arg153, 261–282, and 304–323 each bind FAD; these read HGTY…VGVR and DIDP…IVGD. A thiamine pyrophosphate binding region spans residues 397-477; that stretch reads QHQMFAALYY…VLVVNLNNRY (81 aa). Positions 448 and 475 each coordinate Mg(2+).

It belongs to the TPP enzyme family. As to quaternary structure, dimer of large and small chains. Mg(2+) is required as a cofactor. Thiamine diphosphate serves as cofactor.

The enzyme catalyses 2 pyruvate + H(+) = (2S)-2-acetolactate + CO2. It participates in amino-acid biosynthesis; L-isoleucine biosynthesis; L-isoleucine from 2-oxobutanoate: step 1/4. The protein operates within amino-acid biosynthesis; L-valine biosynthesis; L-valine from pyruvate: step 1/4. Sensitive to valine inhibition. The sequence is that of Acetolactate synthase isozyme 3 large subunit (ilvI) from Escherichia coli (strain K12).